A 491-amino-acid chain; its full sequence is Probable glycine dehydrogenase (decarboxylating) subunit 2 (491 aa).

Lysine 264 bears the N6-(pyridoxal phosphate)lysine mark.

This sequence belongs to the GcvP family. C-terminal subunit subfamily. As to quaternary structure, the glycine cleavage system is composed of four proteins: P, T, L and H. In this organism, the P 'protein' is a heterodimer of two subunits. The cofactor is pyridoxal 5'-phosphate.

It catalyses the reaction N(6)-[(R)-lipoyl]-L-lysyl-[glycine-cleavage complex H protein] + glycine + H(+) = N(6)-[(R)-S(8)-aminomethyldihydrolipoyl]-L-lysyl-[glycine-cleavage complex H protein] + CO2. In terms of biological role, the glycine cleavage system catalyzes the degradation of glycine. The P protein binds the alpha-amino group of glycine through its pyridoxal phosphate cofactor; CO(2) is released and the remaining methylamine moiety is then transferred to the lipoamide cofactor of the H protein. In Coxiella burnetii (strain CbuG_Q212) (Coxiella burnetii (strain Q212)), this protein is Probable glycine dehydrogenase (decarboxylating) subunit 2.